Reading from the N-terminus, the 389-residue chain is MNNPVIVDCIRTPMGRSKGGVFKNKRAEDLSAHLMKGLLDRNPAVDPASIDDIYWGCVQQTLEQGFNVARNAALLAGIPHSVPAVTVNRLCGSSMQALHDAARAIMTGAGDTYLIGGVEHMGHVPMTHGNDFHPGLATSIAQAAGSMGLTAEYLATLHGISREQQDEFAYRSHQRAQAATVEGRFRREILAMEGHAADGSLILVEDDEVIRPETTVEGLSKLRPVFNPASGTVTAGTSSALSDGASAMLVMSEAKAKELGLPIRARIKAMAVAGCDPSIMGYGPVPASKKALAQAGITIDDLGVVELNEAFAAQSLPVMKDLGLMDVVDEKVNLNGGAIALGHPLGCSGSRISTSLIHLMEDKNVRYGLATMCIGLGQGIATVFERVQD.

The active-site Acyl-thioester intermediate is C91. Active-site proton acceptor residues include H343 and C373.

This sequence belongs to the thiolase-like superfamily. Thiolase family. As to quaternary structure, heterotetramer of two alpha chains (FadB) and two beta chains (FadA).

It is found in the cytoplasm. The catalysed reaction is an acyl-CoA + acetyl-CoA = a 3-oxoacyl-CoA + CoA. The protein operates within lipid metabolism; fatty acid beta-oxidation. Functionally, catalyzes the final step of fatty acid oxidation in which acetyl-CoA is released and the CoA ester of a fatty acid two carbons shorter is formed. This Pseudoalteromonas translucida (strain TAC 125) protein is 3-ketoacyl-CoA thiolase.